The sequence spans 154 residues: SsrA-binding protein (154 aa).

Belongs to the SmpB family.

The protein resides in the cytoplasm. In terms of biological role, required for rescue of stalled ribosomes mediated by trans-translation. Binds to transfer-messenger RNA (tmRNA), required for stable association of tmRNA with ribosomes. tmRNA and SmpB together mimic tRNA shape, replacing the anticodon stem-loop with SmpB. tmRNA is encoded by the ssrA gene; the 2 termini fold to resemble tRNA(Ala) and it encodes a 'tag peptide', a short internal open reading frame. During trans-translation Ala-aminoacylated tmRNA acts like a tRNA, entering the A-site of stalled ribosomes, displacing the stalled mRNA. The ribosome then switches to translate the ORF on the tmRNA; the nascent peptide is terminated with the 'tag peptide' encoded by the tmRNA and targeted for degradation. The ribosome is freed to recommence translation, which seems to be the essential function of trans-translation. The chain is SsrA-binding protein from Staphylococcus saprophyticus subsp. saprophyticus (strain ATCC 15305 / DSM 20229 / NCIMB 8711 / NCTC 7292 / S-41).